The following is a 383-amino-acid chain: ATP phosphoribosyltransferase regulatory subunit (383 aa).

This sequence belongs to the class-II aminoacyl-tRNA synthetase family. HisZ subfamily. In terms of assembly, heteromultimer composed of HisG and HisZ subunits.

It is found in the cytoplasm. Its pathway is amino-acid biosynthesis; L-histidine biosynthesis; L-histidine from 5-phospho-alpha-D-ribose 1-diphosphate: step 1/9. Its function is as follows. Required for the first step of histidine biosynthesis. May allow the feedback regulation of ATP phosphoribosyltransferase activity by histidine. The protein is ATP phosphoribosyltransferase regulatory subunit of Paraburkholderia phytofirmans (strain DSM 17436 / LMG 22146 / PsJN) (Burkholderia phytofirmans).